Consider the following 299-residue polypeptide: Taste receptor type 2 member 1 (299 aa).

Topologically, residues 1 to 9 are extracellular; that stretch reads MLESHLIIH. Residues 10 to 30 form a helical membrane-spanning segment; the sequence is FLLAVIQFLLGTFTNGIIVVV. Residues 31–55 lie on the Cytoplasmic side of the membrane; that stretch reads NGIDLIKHRKMAPLDLLLSCLAVSR. Residues 56-76 traverse the membrane as a helical segment; sequence IFLQLFIFYVNVIVIFFIEFI. Over 77-81 the chain is Extracellular; sequence MCSEN. The chain crosses the membrane as a helical span at residues 82–102; that stretch reads CAILLFINELELWLATWLGVF. Residues 103-124 lie on the Cytoplasmic side of the membrane; the sequence is YCAKVASVPHPLFIWLKMKISK. The helical transmembrane segment at 125–145 threads the bilayer; the sequence is LVPWMILGSLLYVSMTCVFHS. At 146-178 the chain is on the extracellular side; that stretch reads KYAGFMVPYFLRNFFSQNATIQKEDTPAIQIFS. N163 carries N-linked (GlcNAc...) asparagine glycosylation. A helical transmembrane segment spans residues 179–199; the sequence is FVAEFLVPLLIFLVAVLLLIF. The Cytoplasmic portion of the chain corresponds to 200 to 222; that stretch reads SLGRHTRQMRNTVAGSRVPGRGA. Residues 223–243 traverse the membrane as a helical segment; sequence PISALLSILSFVILYFSHCMI. The Extracellular segment spans residues 244 to 257; the sequence is KVFLSSLKFHVRSF. The helical transmembrane segment at 258–278 threads the bilayer; it reads ILPFFILVIGIYPSGHSLILI. Over 279-299 the chain is Cytoplasmic; the sequence is LGNXKLKQNAKKFLLHSKCCQ.

It belongs to the G-protein coupled receptor T2R family.

It is found in the membrane. Its function is as follows. Receptor that may play a role in the perception of bitterness and is gustducin-linked. May play a role in sensing the chemical composition of the gastrointestinal content. The activity of this receptor may stimulate alpha gustducin, mediate PLC-beta-2 activation and lead to the gating of TRPM5. In Pongo pygmaeus (Bornean orangutan), this protein is Taste receptor type 2 member 1 (TAS2R1).